The chain runs to 498 residues: Cystathionine beta-synthase (498 aa).

Residues 1 to 25 are disordered; sequence MSAPEGPSKCTWTPNTTENTPHTTR. Over residues 11–22 the composition is skewed to low complexity; the sequence is TWTPNTTENTPH. At Lys-73 the chain carries N6-(pyridoxal phosphate)lysine. Pyridoxal 5'-phosphate is bound by residues Asn-103, 210 to 214, and Ser-302; that span reads GTGGT. 2 CBS domains span residues 374–430 and 435–497; these read TLPK…KKAV and VSKV…SQQK.

The protein belongs to the cysteine synthase/cystathionine beta-synthase family. It depends on pyridoxal 5'-phosphate as a cofactor.

It catalyses the reaction L-homocysteine + L-serine = L,L-cystathionine + H2O. It participates in amino-acid biosynthesis; L-cysteine biosynthesis; L-cysteine from L-homocysteine and L-serine: step 1/2. The sequence is that of Cystathionine beta-synthase (cysB) from Dictyostelium discoideum (Social amoeba).